The chain runs to 348 residues: Hereditary hemochromatosis protein homolog (348 aa).

Positions 1–22 (MGPRARPALFFLILLRTVAAQG) are cleaved as a signal peptide. The tract at residues 23–114 (RPPRSHSLRY…IMDNHNHSKE (92 aa)) is alpha-1. Topologically, residues 23 to 306 (RPPRSHSLRY…WEPSLSNTLV (284 aa)) are extracellular. Residues asparagine 110, asparagine 130, and asparagine 234 are each glycosylated (N-linked (GlcNAc...) asparagine). The interval 115-205 (SHTLQVILGC…ELGRGVLDQQ (91 aa)) is alpha-2. 2 cysteine pairs are disulfide-bonded: cysteine 124–cysteine 187 and cysteine 225–cysteine 282. The segment at 206 to 297 (VPPLVKVTHH…GLDQPLTATW (92 aa)) is alpha-3. Residues 207-296 (PPLVKVTHHV…PGLDQPLTAT (90 aa)) enclose the Ig-like C1-type domain. The segment at 298 to 306 (EPSLSNTLV) is connecting peptide. A helical membrane pass occupies residues 307 to 330 (TGVISGIAVCVIIFLIGILFRILR). Residues 331–348 (KRQASRGAMGDYVLAECE) are Cytoplasmic-facing.

It belongs to the MHC class I family. As to quaternary structure, binds TFR through the extracellular domain in a pH-dependent manner.

It localises to the cell membrane. Functionally, binds to transferrin receptor (TFR) and reduces its affinity for iron-loaded transferrin. This chain is Hereditary hemochromatosis protein homolog (HFE), found in Dicerorhinus sumatrensis (Sumatran rhinoceros).